Consider the following 481-residue polypeptide: ATP synthase subunit beta, chloroplastic (481 aa).

Residue 161–168 (GGAGVGKT) coordinates ATP.

The protein belongs to the ATPase alpha/beta chains family. In terms of assembly, F-type ATPases have 2 components, CF(1) - the catalytic core - and CF(0) - the membrane proton channel. CF(1) has five subunits: alpha(3), beta(3), gamma(1), delta(1), epsilon(1). CF(0) has four main subunits: a(1), b(1), b'(1) and c(9-12).

Its subcellular location is the plastid. It is found in the chloroplast thylakoid membrane. The enzyme catalyses ATP + H2O + 4 H(+)(in) = ADP + phosphate + 5 H(+)(out). Functionally, produces ATP from ADP in the presence of a proton gradient across the membrane. The catalytic sites are hosted primarily by the beta subunits. This Dictyota dichotoma protein is ATP synthase subunit beta, chloroplastic.